Consider the following 318-residue polypeptide: NADH-ubiquinone oxidoreductase chain 1 (318 aa).

Helical transmembrane passes span 2 to 22, 68 to 88, 100 to 120, 147 to 167, 172 to 192, 217 to 237, 253 to 273, and 294 to 314; these read FMINVLTLIIPILLAVAFLTL, ISMFILAPILALTLALTMWIP, LGVLFMLAMSSLAVYSILWSG, AIILLSVLLMNGSFTLSTLII, VWLIFPAWPLAMMWFISTLAE, AGPFALFFMAEYANIIMMNIF, ELYTINFTIKSLLLSITFLWI, and LPLTLALCMWHVSLPILLSSI.

Belongs to the complex I subunit 1 family.

The protein resides in the mitochondrion inner membrane. It carries out the reaction a ubiquinone + NADH + 5 H(+)(in) = a ubiquinol + NAD(+) + 4 H(+)(out). Its function is as follows. Core subunit of the mitochondrial membrane respiratory chain NADH dehydrogenase (Complex I) that is believed to belong to the minimal assembly required for catalysis. Complex I functions in the transfer of electrons from NADH to the respiratory chain. The immediate electron acceptor for the enzyme is believed to be ubiquinone. This chain is NADH-ubiquinone oxidoreductase chain 1 (MT-ND1), found in Ovis aries (Sheep).